A 308-amino-acid polypeptide reads, in one-letter code: Mu-like prophage FluMu major head subunit (308 aa).

To phage Mu protein T.

This chain is Mu-like prophage FluMu major head subunit, found in Haemophilus influenzae (strain ATCC 51907 / DSM 11121 / KW20 / Rd).